Reading from the N-terminus, the 332-residue chain is Ubiquinone biosynthesis protein COQ4, mitochondrial (332 aa).

The N-terminal 24 residues, 1 to 24, are a transit peptide targeting the mitochondrion; sequence MLRLGVSRTPINRQFVGYEQRRHF. The Zn(2+) site is built by H210, D211, H214, and E226.

This sequence belongs to the COQ4 family. In terms of assembly, component of a multi-subunit COQ enzyme complex, composed of at least COQ3, COQ4, COQ5, COQ6, COQ7 and COQ9. Requires Zn(2+) as cofactor.

It localises to the mitochondrion inner membrane. The enzyme catalyses a 4-hydroxy-3-methoxy-5-(all-trans-polyprenyl)benzoate + H(+) = a 2-methoxy-6-(all-trans-polyprenyl)phenol + CO2. It functions in the pathway cofactor biosynthesis; ubiquinone biosynthesis. Functionally, lyase that catalyzes the C1-decarboxylation of 4-hydroxy-3-methoxy-5-(all-trans-polyprenyl)benzoic acid into 2-methoxy-6-(all-trans-polyprenyl)phenol during ubiquinone biosynthesis. The sequence is that of Ubiquinone biosynthesis protein COQ4, mitochondrial from Zygosaccharomyces rouxii (strain ATCC 2623 / CBS 732 / NBRC 1130 / NCYC 568 / NRRL Y-229).